The following is a 612-amino-acid chain: Threonine--tRNA ligase (612 aa).

Residues asparagine 218–proline 509 form a catalytic region. 3 residues coordinate Zn(2+): cysteine 310, histidine 361, and histidine 486.

The protein belongs to the class-II aminoacyl-tRNA synthetase family. In terms of assembly, homodimer. The cofactor is Zn(2+).

It is found in the cytoplasm. The enzyme catalyses tRNA(Thr) + L-threonine + ATP = L-threonyl-tRNA(Thr) + AMP + diphosphate + H(+). In terms of biological role, catalyzes the attachment of threonine to tRNA(Thr) in a two-step reaction: L-threonine is first activated by ATP to form Thr-AMP and then transferred to the acceptor end of tRNA(Thr). Also edits incorrectly charged L-seryl-tRNA(Thr). The chain is Threonine--tRNA ligase from Helicobacter pylori (strain Shi470).